A 184-amino-acid polypeptide reads, in one-letter code: MLTPFCSSHHLQEKMNSCQSNPTKMDNSENVLFNDQNENFTLVAPHPSSSYLTRDQEHEIMVSALRQVISNSGADDASSSNLIITSVPPPDAGPCPLCGVAGCYGCTLQRPHREVKKEKKYKGVRKKPSGKWAAEIWDPRSKSRRWLGTFLTAEMAAQSYNDAAAEYRARRGKTNGEGIKRRWR.

The AP2/ERF DNA-binding region spans 120-177 (KYKGVRKKPSGKWAAEIWDPRSKSRRWLGTFLTAEMAAQSYNDAAAEYRARRGKTNGE).

Belongs to the AP2/ERF transcription factor family. ERF subfamily.

It is found in the nucleus. Its function is as follows. Probably acts as a transcriptional activator. Binds to the GCC-box pathogenesis-related promoter element. May be involved in the regulation of gene expression by stress factors and by components of stress signal transduction pathways. In Arabidopsis thaliana (Mouse-ear cress), this protein is Ethylene-responsive transcription factor ERF122 (ERF122).